A 685-amino-acid chain; its full sequence is Allergen Cr-PI (685 aa).

The signal sequence occupies residues 1 to 16 (MKTALVFAAVVAFVAA). A glycan (N-linked (GlcNAc...) asparagine) is linked at N233.

Belongs to the hemocyanin family.

Its subcellular location is the secreted. The protein resides in the extracellular space. Larval storage protein (LSP) which may serve as a store of amino acids for synthesis of adult proteins. This Periplaneta americana (American cockroach) protein is Allergen Cr-PI.